The chain runs to 563 residues: Mitochondrial distribution and morphology protein 34 (563 aa).

The SMP-LTD domain occupies 1-195; sequence MAFNFNWSPL…LPAIIHRLSL (195 aa). 2 disordered regions span residues 298-460 and 535-563; these read ERGD…QIPT and RHDK…PKAL. Composition is skewed to polar residues over residues 303 to 332 and 346 to 357; these read AGTT…FSNR and SLVNMNSATTGL. Residues 365 to 383 show a composition bias toward basic residues; the sequence is SRSHTTRKKKNRVVNLRKS. Polar residues-rich tracts occupy residues 386-402 and 444-460; these read TDNV…SITA and PSRS…QIPT.

This sequence belongs to the MDM34 family. In terms of assembly, component of the ER-mitochondria encounter structure (ERMES) or MDM complex, composed of mmm1, mdm10, mdm12 and mdm34.

The protein localises to the mitochondrion outer membrane. In terms of biological role, component of the ERMES/MDM complex, which serves as a molecular tether to connect the endoplasmic reticulum (ER) and mitochondria. Components of this complex are involved in the control of mitochondrial shape and protein biogenesis, and function in nonvesicular lipid trafficking between the ER and mitochondria. Mdm34 is required for the interaction of the ER-resident membrane protein mmm1 and the outer mitochondrial membrane-resident beta-barrel protein mdm10. The polypeptide is Mitochondrial distribution and morphology protein 34 (Sclerotinia sclerotiorum (strain ATCC 18683 / 1980 / Ss-1) (White mold)).